The primary structure comprises 609 residues: Glutamine--fructose-6-phosphate aminotransferase [isomerizing] (609 aa).

Cys-2 serves as the catalytic Nucleophile; for GATase activity. One can recognise a Glutamine amidotransferase type-2 domain in the interval Cys-2–Arg-218. SIS domains lie at Ala-286–Leu-426 and Leu-458–Pro-599. Lys-604 (for Fru-6P isomerization activity) is an active-site residue.

Homodimer.

Its subcellular location is the cytoplasm. It carries out the reaction D-fructose 6-phosphate + L-glutamine = D-glucosamine 6-phosphate + L-glutamate. Functionally, catalyzes the first step in hexosamine metabolism, converting fructose-6P into glucosamine-6P using glutamine as a nitrogen source. This chain is Glutamine--fructose-6-phosphate aminotransferase [isomerizing], found in Escherichia coli O157:H7.